We begin with the raw amino-acid sequence, 439 residues long: MGKLRVMSLFSGIGAFEAALRNIGVGYELVGFSEIDKYAVKSFCAIHNVDEQLNFGDVSKIDKKKLPEFDLLVGGSPCQSFSVAGHRKGFEDTRGTLFFQYVETLKEKQPKFFVFENVKGLINHDKGNTLNVMAEAFSEVGYRIDLELLNSKFFNVPQNRERLYIIGIREDLIKNEEWSLDFKRKDILQKGKQRLVELDIKSFNFRWTAQSAATKRLKDLLEEYVDEKYYLNEDKTNSLIKELSTSRLNENLTVEQVGNINPSGNGMNGNVYNSSGLSPTITTNKGEGLKIAVEYSRKSGLGRELAVSHTLSASDWRGLNRNQKQNAVVEVRPVLTPERGEKRQNGRRFKDDGEPAFTVNTIDRHGVAVGEYPKYRIRRLTPLECFRLQAFDDEDFEKAFAAGISNSQLYKQTGNSITVTVLESIFKELIHTYINKESE.

One can recognise an SAM-dependent MTase C5-type domain in the interval 4–436 (LRVMSLFSGI…KELIHTYINK (433 aa)). C78 is a catalytic residue.

The protein belongs to the class I-like SAM-binding methyltransferase superfamily. C5-methyltransferase family. Monomer.

The enzyme catalyses a 2'-deoxycytidine in DNA + S-adenosyl-L-methionine = a 5-methyl-2'-deoxycytidine in DNA + S-adenosyl-L-homocysteine + H(+). A methyltransferase that methylates the C-1 in the sequence 5'-GGCC-3' and both cytosines in the sequence 5'-CCGG-3'. A methyltransferase that methylates C-3 within the sequence 5'-GGCC-3', C-1 in 5'-CCGG-3' and C-2 in 5'-CCWGG-3'. Modification confers resistance against restriction enzymes that recognize these sequences. In Bacillus phage SPR (Bacteriophage SPR), this protein is Orphan methyltransferase M.SPRI.